A 353-amino-acid chain; its full sequence is Photosystem II D2 protein (353 aa).

T2 carries the N-acetylthreonine modification. T2 is subject to Phosphothreonine. The helical transmembrane segment at 41–61 (CAYFALGGWFTGTTFVTSWYT) threads the bilayer. H118 is a binding site for chlorophyll a. Residues 125–141 (GFMLRQFELARSVQLRP) form a helical membrane-spanning segment. Pheophytin a-binding residues include Q130 and N143. A helical membrane pass occupies residues 153-166 (VFVSVFLIYPLGQS). H198 contacts chlorophyll a. Residues 208–228 (AALLCAIHGATVENTLFEDGD) form a helical membrane-spanning segment. A plastoquinone-binding residues include H215 and F262. H215 contacts Fe cation. H269 contributes to the Fe cation binding site. The chain crosses the membrane as a helical span at residues 279–295 (GLWMSAIGVVGLALNLR).

Belongs to the reaction center PufL/M/PsbA/D family. In terms of assembly, PSII is composed of 1 copy each of membrane proteins PsbA, PsbB, PsbC, PsbD, PsbE, PsbF, PsbH, PsbI, PsbJ, PsbK, PsbL, PsbM, PsbT, PsbX, PsbY, PsbZ, Psb30/Ycf12, at least 3 peripheral proteins of the oxygen-evolving complex and a large number of cofactors. It forms dimeric complexes. The cofactor is The D1/D2 heterodimer binds P680, chlorophylls that are the primary electron donor of PSII, and subsequent electron acceptors. It shares a non-heme iron and each subunit binds pheophytin, quinone, additional chlorophylls, carotenoids and lipids. There is also a Cl(-1) ion associated with D1 and D2, which is required for oxygen evolution. The PSII complex binds additional chlorophylls, carotenoids and specific lipids..

It is found in the plastid. Its subcellular location is the chloroplast thylakoid membrane. The enzyme catalyses 2 a plastoquinone + 4 hnu + 2 H2O = 2 a plastoquinol + O2. Photosystem II (PSII) is a light-driven water:plastoquinone oxidoreductase that uses light energy to abstract electrons from H(2)O, generating O(2) and a proton gradient subsequently used for ATP formation. It consists of a core antenna complex that captures photons, and an electron transfer chain that converts photonic excitation into a charge separation. The D1/D2 (PsbA/PsbD) reaction center heterodimer binds P680, the primary electron donor of PSII as well as several subsequent electron acceptors. D2 is needed for assembly of a stable PSII complex. The chain is Photosystem II D2 protein from Welwitschia mirabilis (Tree tumbo).